Reading from the N-terminus, the 644-residue chain is Threonine--tRNA ligase (644 aa).

One can recognise a TGS domain in the interval 3–64 (EMIRITFPDG…QEDGSISIIT (62 aa)). The segment at 245-542 (DHRKLGKELE…LIEEYKGAFP (298 aa)) is catalytic. Residues Cys338, His389, and His519 each coordinate Zn(2+).

Belongs to the class-II aminoacyl-tRNA synthetase family. In terms of assembly, homodimer. The cofactor is Zn(2+).

The protein localises to the cytoplasm. The catalysed reaction is tRNA(Thr) + L-threonine + ATP = L-threonyl-tRNA(Thr) + AMP + diphosphate + H(+). In terms of biological role, catalyzes the attachment of threonine to tRNA(Thr) in a two-step reaction: L-threonine is first activated by ATP to form Thr-AMP and then transferred to the acceptor end of tRNA(Thr). Also edits incorrectly charged L-seryl-tRNA(Thr). The protein is Threonine--tRNA ligase of Geobacillus sp. (strain WCH70).